Here is a 148-residue protein sequence, read N- to C-terminus: 3-dehydroquinate dehydratase (148 aa).

Y24 functions as the Proton acceptor in the catalytic mechanism. N75, H81, and D88 together coordinate substrate. H101 acts as the Proton donor in catalysis. Residues 102-103 (LS) and R112 contribute to the substrate site.

It belongs to the type-II 3-dehydroquinase family. Homododecamer.

It carries out the reaction 3-dehydroquinate = 3-dehydroshikimate + H2O. It functions in the pathway metabolic intermediate biosynthesis; chorismate biosynthesis; chorismate from D-erythrose 4-phosphate and phosphoenolpyruvate: step 3/7. Its function is as follows. Catalyzes a trans-dehydration via an enolate intermediate. The sequence is that of 3-dehydroquinate dehydratase from Sinorhizobium medicae (strain WSM419) (Ensifer medicae).